Here is a 439-residue protein sequence, read N- to C-terminus: MSNYFDKIAKVNYEGANSTNPFAFKHYNPNEVILGKTVEEHLRLAVCYWHTFCWTGNDMFGAGSLDRSWQKTGDLLVGAKQKAEIAFEFFQKLGVPYYSFHDVDIAPESNNFKEYLHNFNTIVDILEKKQSETGVKLLWGTANCFTNPRYMSGASTNPNPEVFAWAAAQVFTAMNATQRLGGENYVLWGGREGYETLLNTDLKREREQIGRFMQLVVEHKYKIGFQGTLLIEPKPQEPTKHQYDYDVATVYGFLKQFGLENEIKVNIEANHATLAGHTFQHEIATATSLGIFGSIDANRGDPQLGWDTDQFPNSVEENTLAMYEILKAGGFTTGGFNFDAKIRRQSTDPYDLFHAHIGAMDVLALSLKRAAKMIEDQTLQKVVDNRYAGWDQELGQKILSGKASLEDLAKIVETQGLDPKPVSGQQEYLENLVNSYLYR.

Catalysis depends on residues H101 and D104. Mg(2+) is bound by residues E232, E268, H271, D296, D307, D309, and D339.

The protein belongs to the xylose isomerase family. In terms of assembly, homotetramer. Mg(2+) is required as a cofactor.

It localises to the cytoplasm. It catalyses the reaction alpha-D-xylose = alpha-D-xylulofuranose. The protein is Xylose isomerase of Histophilus somni (strain 2336) (Haemophilus somnus).